The chain runs to 364 residues: Nucleoporin SEH1 (364 aa).

6 WD repeats span residues 10 to 49, 55 to 96, 111 to 152, 160 to 210, 217 to 258, and 275 to 314; these read DHKD…EWNC, THSG…SNDK, DSRT…NLSQ, SCKL…RKYA, TVTD…KESS, and GHNS…NWKC. The tract at residues 326 to 364 is disordered; it reads NGAAGQAGTPGAAGTPGGPASQNALQAVAGRKKAQLMPG. The segment covering 327 to 338 has biased composition (low complexity); it reads GAAGQAGTPGAA. Residues 355–364 are compositionally biased toward basic residues; sequence GRKKAQLMPG.

This sequence belongs to the WD repeat SEC13 family. Component of the Nup107-160 subcomplex of the nuclear pore complex (NPC). The Nup107-160 subcomplex includes NUP160, NUP133, NUP107, NUP98, NUP85, NUP43, NUP37, SEH1 and SEC13. Component of the GATOR2 subcomplex, composed of MIOS, SEC13, SEH1L, WDR24 and WDR59. The GATOR2 complex interacts with CASTOR1 and CASTOR2; the interaction is negatively regulated by arginine. The GATOR2 complex interacts with SESN1, SESN2 and SESN3; the interaction is negatively regulated by amino acids.

The protein localises to the chromosome. The protein resides in the centromere. It localises to the kinetochore. Its subcellular location is the nucleus. It is found in the nuclear pore complex. The protein localises to the lysosome membrane. The GATOR2 complex is negatively regulated by the upstream amino acid sensors CASTOR1 and SESN2, which sequester the GATOR2 complex in absence of amino acids. In the presence of abundant amino acids, GATOR2 is released from CASTOR1 and SESN2 and activated. Functionally, component of the Nup107-160 subcomplex of the nuclear pore complex (NPC). The Nup107-160 subcomplex is required for the assembly of a functional NPC. The Nup107-160 subcomplex is also required for normal kinetochore microtubule attachment, mitotic progression and chromosome segregation. This subunit plays a role in recruitment of the Nup107-160 subcomplex to the kinetochore. Its function is as follows. As a component of the GATOR2 complex, functions as an activator of the amino acid-sensing branch of the mTORC1 signaling pathway. The GATOR2 complex indirectly activates mTORC1 through the inhibition of the GATOR1 subcomplex. GATOR2 probably acts as an E3 ubiquitin-protein ligase toward GATOR1. In the presence of abundant amino acids, the GATOR2 complex mediates ubiquitination of the NPRL2 core component of the GATOR1 complex, leading to GATOR1 inactivation. In the absence of amino acids, GATOR2 is inhibited, activating the GATOR1 complex. The chain is Nucleoporin SEH1 (seh1l) from Osmerus mordax (Rainbow smelt).